A 21-amino-acid polypeptide reads, in one-letter code: Trypsin (21 aa).

The protein belongs to the peptidase S1 family.

Its subcellular location is the secreted. It is found in the extracellular space. It catalyses the reaction Preferential cleavage: Arg-|-Xaa, Lys-|-Xaa.. This Apis mellifera scutellata (Africanized honey bee) protein is Trypsin.